The following is a 331-amino-acid chain: 4-hydroxythreonine-4-phosphate dehydrogenase (331 aa).

His137 and Thr138 together coordinate substrate. A divalent metal cation-binding residues include His167, His212, and His267. Positions 275, 284, and 293 each coordinate substrate.

Belongs to the PdxA family. As to quaternary structure, homodimer. Requires Zn(2+) as cofactor. It depends on Mg(2+) as a cofactor. Co(2+) serves as cofactor.

Its subcellular location is the cytoplasm. It carries out the reaction 4-(phosphooxy)-L-threonine + NAD(+) = 3-amino-2-oxopropyl phosphate + CO2 + NADH. The protein operates within cofactor biosynthesis; pyridoxine 5'-phosphate biosynthesis; pyridoxine 5'-phosphate from D-erythrose 4-phosphate: step 4/5. Functionally, catalyzes the NAD(P)-dependent oxidation of 4-(phosphooxy)-L-threonine (HTP) into 2-amino-3-oxo-4-(phosphooxy)butyric acid which spontaneously decarboxylates to form 3-amino-2-oxopropyl phosphate (AHAP). This is 4-hydroxythreonine-4-phosphate dehydrogenase from Yersinia pestis bv. Antiqua (strain Angola).